Here is a 709-residue protein sequence, read N- to C-terminus: ATP-dependent zinc metalloprotease FtsH (709 aa).

Residues 1–25 are Cytoplasmic-facing; it reads MKKNKGLNEATTSEKPQFPKRTAWK. A helical transmembrane segment spans residues 26–46; the sequence is IFWWVVILAIIIGILVYILMP. Residues 47–171 are Extracellular-facing; sequence RATTAVIEKW…FVAPDTRARD (125 aa). A helical transmembrane segment spans residues 172–192; that stretch reads VLNIFFGLLPIIIFVIFFLLF. The Cytoplasmic segment spans residues 193 to 709; the sequence is WRSARGISGG…DTEKDSETNS (517 aa). 268-275 contributes to the ATP binding site; it reads GPPGTGKT. Zn(2+) is bound at residue His-490. Residue Glu-491 is part of the active site. Zn(2+)-binding residues include His-494 and Asp-569. The tract at residues 673 to 709 is disordered; that stretch reads ILAQKQEQQAKQKAEAKEAKLNKKTEKDTEKDSETNS. Basic and acidic residues predominate over residues 680–709; sequence QQAKQKAEAKEAKLNKKTEKDTEKDSETNS.

In the central section; belongs to the AAA ATPase family. It in the C-terminal section; belongs to the peptidase M41 family. Homohexamer. It depends on Zn(2+) as a cofactor.

The protein resides in the cell membrane. Functionally, acts as a processive, ATP-dependent zinc metallopeptidase for both cytoplasmic and membrane proteins. Plays a role in the quality control of integral membrane proteins. The polypeptide is ATP-dependent zinc metalloprotease FtsH (Mycoplasma pneumoniae (strain ATCC 29342 / M129 / Subtype 1) (Mycoplasmoides pneumoniae)).